The primary structure comprises 261 residues: Kynurenine formamidase (261 aa).

Ser-9 is modified (phosphoserine). The HGGXW signature appears at 36-40; it reads HGGAW. Ser-110 acts as the Nucleophile in catalysis. Residues Asp-211 and His-243 contribute to the active site.

Belongs to the kynurenine formamidase family. Homodimer.

The catalysed reaction is N-formyl-L-kynurenine + H2O = L-kynurenine + formate + H(+). It participates in amino-acid degradation; L-tryptophan degradation via kynurenine pathway; L-kynurenine from L-tryptophan: step 2/2. In terms of biological role, catalyzes the hydrolysis of N-formyl-L-kynurenine to L-kynurenine, the second step in the kynurenine pathway of tryptophan degradation. Kynurenine may be further oxidized to nicotinic acid, NAD(H) and NADP(H). Required for elimination of toxic metabolites. The polypeptide is Kynurenine formamidase (Saccharomyces cerevisiae (strain ATCC 204508 / S288c) (Baker's yeast)).